The primary structure comprises 425 residues: Perilipin-2 (425 aa).

Ala2 bears the N-acetylalanine mark. A Phosphoserine modification is found at Ser213. Position 230 is a phosphotyrosine (Tyr230).

It belongs to the perilipin family. In terms of assembly, interacts with IRGC. Post-translationally, acylated; primarily with C14, C16 and C18 fatty acids. Phosphorylation at Tyr-230 by isoform 1 of CHKA (CHKalpha2) promotes dissociation from lipid droplets: dissociation is followed by recruitment of autophagosome machinery to lipid droplets and subsequent lipid droplet lipolysis. In terms of processing, polyubiquitination of Nt-acetylatable A-PLIN2 by MARCHF6 lead to degradation by 26S proteasomes. In terms of tissue distribution, adipose tissue specific. Expressed abundantly and preferentially in fat pads.

It is found in the membrane. The protein localises to the lipid droplet. In terms of biological role, structural component of lipid droplets, which is required for the formation and maintenance of lipid storage droplets. The sequence is that of Perilipin-2 from Mus musculus (Mouse).